The primary structure comprises 161 residues: Endoribonuclease YbeY (161 aa).

Zn(2+) is bound by residues His-121, His-125, and His-131.

It belongs to the endoribonuclease YbeY family. Zn(2+) is required as a cofactor.

It is found in the cytoplasm. Single strand-specific metallo-endoribonuclease involved in late-stage 70S ribosome quality control and in maturation of the 3' terminus of the 16S rRNA. The polypeptide is Endoribonuclease YbeY (Stenotrophomonas maltophilia (strain K279a)).